The chain runs to 226 residues: Enolase-phosphatase E1 (226 aa).

Belongs to the HAD-like hydrolase superfamily. MasA/MtnC family. As to quaternary structure, monomer. Mg(2+) serves as cofactor.

The enzyme catalyses 5-methylsulfanyl-2,3-dioxopentyl phosphate + H2O = 1,2-dihydroxy-5-(methylsulfanyl)pent-1-en-3-one + phosphate. The protein operates within amino-acid biosynthesis; L-methionine biosynthesis via salvage pathway; L-methionine from S-methyl-5-thio-alpha-D-ribose 1-phosphate: step 3/6. It participates in amino-acid biosynthesis; L-methionine biosynthesis via salvage pathway; L-methionine from S-methyl-5-thio-alpha-D-ribose 1-phosphate: step 4/6. Functionally, bifunctional enzyme that catalyzes the enolization of 2,3-diketo-5-methylthiopentyl-1-phosphate (DK-MTP-1-P) into the intermediate 2-hydroxy-3-keto-5-methylthiopentenyl-1-phosphate (HK-MTPenyl-1-P), which is then dephosphorylated to form the acireductone 1,2-dihydroxy-3-keto-5-methylthiopentene (DHK-MTPene). This is Enolase-phosphatase E1 from Shewanella baltica (strain OS223).